The following is a 5082-amino-acid chain: MSRFSCIFPTLTDGYVPNPDHTRAAGRRTYRIDLSGWKAPGSETESLILAAWGLVLSSYVGTDEVAFYVVPTTGPDTTALAELKVEGDMPRQSLTYAAHQLLHPGLVGAGQVSGETANTIITFANDIESLFVTQTEESFLSLHVYRDEQGHISLSLTYYLSLLTDAQAANVGTAMAQALAEVGTCDNDKLVKDLSLMSPAHLEHIWRFNADVPGIWEECFHDVIERHAANRPHSLAVDAWDTKLTYTDLVREARLLAAYLQRRGVGPGSVVPISFERSGAALVAMLAVSKAGGAFVSVPPNLPAGRVDAILEVIEAPFVVTWTKYESFWAERLPTLPIDNYPKPAADATVEALGKPEDLFYVIFTSGSTGRPKGCMLSHTNWLNGALRNAPSWKYGPESRVLQMLSHTFDMSLLEICTSLGSGSCVCVPRPEEIETSISDAINRWQVNHVIMTPSLARALRPDDVPGLKTMCLGGEAFPKEIVTMWSERINLWQFYGPSECSINSSSWPITRPDADPLNIGPPNSAACWVVDVHDYNKLVPVGAIGELLVSGPIVGMGYLKNPVKTAEAFLEEVGFVAKDDPQFGGFRFYRTGDLVRWNSDGTITFCGRADTQVKLNGQRLELAEVEYQLGLEAGVQYAIAMAPQAGLCKNNLIAILTVKGTSTGTQDTAADEIPLLDRRDPIVQETVKKLRSQLQHALPRYMVPTIWAFVGRMPMSASGKIDRRMSQETFDAITGRSLEAEEHAFGLSRLEQKIQLAWAEALGLSAAEVGLQQPFVALGGDSIKALDAVARCRARQIKISMVHILSCEGVREAASLAEVQETPAQQVAEMAVDYSNLWTRLSNDYDLDKLGVTQVEEVENVFPCTTMQEGMFLGQIRRPGAYHMRFFHRVQLKGGCLPTVERIQQAWASLVERHPSLRTVFVDDLSPEAIYHSIVLRSVPMEVRMREVPRDLSAEAALAIFTEELVPFRANAPLHRMLLLTCRGRVPYLMLEISHVIMDGYALSVFRREFIRACSSSAPLPRGPDYRMFANYHRTRQTDDSARYWTDYLADCVPCHIPTHAVSAPSDGPPEWPRTLQRRDFGFENSAAFLQRCKERQVTLACAIRAAWALVLRAYTQSEDVCFGYVSSGRNVPVPEVETIFGLCLSMQVCRARLSEASTIASLARKIQEDYVASLPFQHYPLAEAQRGLKQTHGQGLFNTAISMEWVPPSAEDEDALLDLEEIREQDDPTEYDIAISVDVHEGHIKLGFLYWPDLTDFEINHLAEALHGAMNCFASHPDEALNTLSLLQASDVCSALSDGPTLLPLEAVRGNVVSMIDRWVTRQPEGAAIDGWDGSMSYKELHEQSSWVARNLLHQGVRLGDRVLVCADRSSRTVATILGIVRAGCVLVLSNPTDPEKRLQWLAKKCNASLVVADPTYEERLATADAHVLSTTSVCAPAAWDYEFPALDEHDLISILFTSGSTGTPKGILMEHGALATSVFLGHGRTLRFSRHTRMLHFASLTFDAALAEIFTTLAHGGCICVPCEEDRLSDVPGCISRFAVNTAMLTPSVGRLLDPGALPTLQTLIMVGEPMSRLDVERFAPVLDLYNGAGPTETSIMVTIAGPMKPTDEPVNLGYAVAGVRLWVTEAENPNRLAPLGAVGELIVEGRLVTSGYLDDQARTQEAFLPTLPWLPSQHALYRTGDLVRYVDDGSLRYMGRKDTQVKLRGQRIELQEVEYHLRKSLQQAQIVVEMVVPAGKMRAQASLVAFVSGLTAADVESSSACNLEGTIPISQIVLPKSAFQALEEVLPRHMIPSVYYALDTIPLSVNGKADRRRLREMGSLLLASSAAHKNNIEGMSKSVKWTPTLELERTLLGLWAATLGLEAETIHGDDSFFELGGDSVSAMKLVATARDKYKLSLSVPQMFRYPTVCQLAAEVGEPAGQSASSASSTTEEGFTFSTPDDSSTNDGVDDDFLQLATAQLAQLAQEKGKKVDIAALLKQLQGGSSSNKTPSVSSSSSSSSSSKRKKNAAKAESLAEAAAPIPVQFSLLDGGADALDKVRAQAVEHCKITHEDIEDIYPATALQEGMMALTARTPGVYTTTLTGDLSEQVDIARLQYAWGKAAEAHPILRTRIILTDNNTAVQVVQRAKGLPWDTYSLREDNVLPDLTSNMTSGSPLLRLAVVHRQSQPRMLLVAIHHALYDGWSMPLLKQAVEDAYHGRDLRPQPFTPFIKHLIAGKPAAQDFWTTHLDNFVGGVFPKLPSIYHQIQPTERRTRSMTLPTAAPKAQYTMATKIQAAWAVTVSRYVEANDIVFGTVSTGRSAPVPAIDRMVGPTVTTVPVRISLGGQADRVLSLLQRVQEDSWNKLDHEHLGLQHIRRLGESAAAACNFQTLLVIQPREQPDTKYRSTLLSGLQDVAELEGVDTYPLMLVCEPDGASLNLTAVFDRAVLDGATLDRMLAHWELVLTQMWNEPNMAVIDIDAVSCSDKETLMRWNTGETITEGCAHNAVCEWSRRTPHAPAVCAWDGEWTYKELERYSSLIASQISAHGLSSGDFVALYHEKSRWTAAGILAVFKAGAILITLDPAHPTDRIKDILDQARPRLILTSQSLLDVARNLDTPVLSVQFAASQPLPEEWSSLPTICPTLAAYAPFTSGSTGRPKGIPLDHRGLAASTASIARSCLLRPASRVLHFASFAFDASMMEHLIAWHAGGCLCIPDETARQTDLAKCIRDFNVTWAFLTPSCLRLITPDDVPSLQALGLGGESMTSEDITIWSPRLRQIVQLYGPAECCIVAALTEVTKPSENRLIGRPNACRCWVVDPQNPDRLAPIGAVGELLIEGITVGRGYINDPDRTTPAFIRPPKWLQTLYPDDQEPKRLYRTGDLVRYAGVDGKLAFIGRRDGQLKLHGQRIELADVEAHLRSLIPGMQKMVVEMVHSADNQNPFLAAFLEEISTSQKPKEREIGLLHPSQSQCALDVKAIDSALSRTVPQYMIPSMYLHISRLPLSASGKLDRRHLREMVAELPRQSLNEYAAGSGLGVPDRPVTSQEHEMQAIWARVLSLDPNTFGVNDDFFRIGGDSISGMQVSTKCNAAGIHITSADLFRHRTIEQLICHLNTIRTTDSASVLLPTEPVNEWVALAPIQHLFFEVAPEGPNHFNQSLLLRTSRRVSVEELAGGLDVLIGRHSMLRARFCRKDSGQWFQQVKSLDSEPASAFYRLAAHNHITRESLRTLFTAAQMALSIEDGPLLTVDLVELEDGSQLVYLAAHHLIIDLVSWRILHGDLEEYLQTGSLSSATGSVPFLTWTQLQAEYSAEHLTPARALPGFQEANDDFDFMRYWGISSESNTFGQTSTSRFALDRTVTDILFGSANKVMDTRPVEILEAALWYSCNQALPDHPGPSIYVEGHGREPWTDSIDVSGTVGWFTIMSPLVSTPWHHLSRKSMRDFVDVLSYIKDQRRRIPANGWAYFTSRYLNDEGRVAYGRTKPVMEVLFNYMGQYQEMKREDAILQLAGDDIQSGTGASDIAGNVPRFSLIDVTAFTANGCLTFEFTFPQLIQQDARLEQCIKECEHTLVAAASSLSAEGPRKTLTDFPLMSALTYDQLSQCLNHTLPSMGLRAQDVWNIYPCSPVQRGMLLAQLRDRQAYQQRFKFQVMSRGPTEQLSLEKVKDAWTEVINRHDILRTLLLPVSDHSHFDQVVMVPGSLQHLVRGDAMDANPTEGLPHTINITSDSTGAIICEWNVSHALVDAMSIAFIQREVNQALEGSLGQHQNLPQYVEYIKWLTLQDNTEAQAYWQNHLNGVEPCLFPKLTSSPDKVNPEATISAIRATWSRDVRMDELCHKHAITLTNLFHIVWAIVLGAYVGTDEVCFGYTALGRDVPVHRVETLVGPLVNVLATTVRHQEDETILNALLTHQAHLTNSLQHQHYALADVYASLGLVGSQLFNTIVSLQDTSHFDAPDEQRTRLEMLPANDVSEYDVALNIGVDKSTIQLVCSYQTVSLSAEQADALLRTAFHVLDEILRDPTQRFCELEVISPKCKEHLVKWNAGMLAPTHEYIHEKIQGQCRIHNSRQAVFDDLSSRLAARLIRMGVTSEDIIPIYSPKSRWMVIAILGVLKAGAAFTLLEISHPMARLRVICNQIKAPMLIAPASHAVPAANLAPILVVLDNITSLAEERPVSLPAVDIPPAREALAYLIFTSGSTGNPKGVMVTHQNLCSNASIITTSVNMTSDSRVLQFASHAFDGCLWEILGALLAGACLIIPSESENKEDLTGCIERMGVTWAFLTPSVARILKPETLPSLCNLVLGGEPIAASDLEMWRGHVQVVCAYGPTETTILASTTSPSTFPRDGKDIGTPTSSSLWIVDTRNYQTLVPLGATGELLIEGPNVSQGYLGDPEKTNDAFPDAPRWLSQLRKSPTRLYRTGDLVRFDTSTGTIRFVGRKDNQIKFHGQRIELGEIEYHAQFAFSSASTVIVDLITPEQPRQPYIVAFVHQLDAANETTDTNDTLLLPSSEVFRADALAAQNKMHKRLPHYMVPAVFLPLHRLPLSVTGKADRKRLRQCALALSSPELSAYRATASTKRMPSTAAERKMQELVATVLGRDPTEIGMDDSFFYLGGDSVQAMRLVAEGRQQGLTLSLRAIFDSPCLGDLSDQAKSLIEDNQRASTASRGNLRYDCDRIDKIVVTNSLNKADVVDVLPTTSFQRHWLDAQLKSYIVVDIPGPIDPARLLRAMHRVVEAHPILRVSFVPYETTTVQVILRTAVAITNVDLSTATVEELCRRDVDAQMAPGVPYLRVIIATQDKAGHKLIMRLSHAQYDAVSLSLLMNDLSHAYANDTHPLPSSHFPRFNDYITYQQAQRADLTATTFWRHLLQDVPLTHLNLQPAESSASNGTPITLSRDIDIAVFPSLPSDITIATMVKAAWSLALAQKTNSLAVIFGQVVHGRAIALPGVEGIVGPCANITPVVARLGLETTGLELMQALQDQHHSAMSYESVDLDDALAYANDSQAGRKGLQTIVQHQNNVMVDDMELSLGEVKCGVDFRAVDHLPKEVWVYSSVDEKRPGMLEVKIMSSTLVLGEEFAEELMGLLVEKIVGLLRHPESVCV.

The adenylation 1 stretch occupies residues 225-616 (ERHAANRPHS…CGRADTQVKL (392 aa)). Residues 749–822 (SRLEQKIQLA…EAASLAEVQE (74 aa)) form the Carrier 1 domain. At Ser-783 the chain carries O-(pantetheine 4'-phosphoryl)serine. The tract at residues 860-1291 (ENVFPCTTMQ…ALNTLSLLQA (432 aa)) is condensation 1. An adenylation 2 region spans residues 1319–1708 (DRWVTRQPEG…GRKDTQVKLR (390 aa)). One can recognise a Carrier 2 domain in the interval 1846 to 1923 (TPTLELERTL…QLAAEVGEPA (78 aa)). Ser-1883 bears the O-(pantetheine 4'-phosphoryl)serine mark. 2 disordered regions span residues 1924–1953 (GQSASSASSTTEEGFTFSTPDDSSTNDGVD) and 1986–2012 (GGSSSNKTPSVSSSSSSSSSSKRKKNA). Composition is skewed to low complexity over residues 1926–1950 (SASSASSTTEEGFTFSTPDDSSTND) and 1988–2005 (SSSNKTPSVSSSSSSSSS). The condensation 2 stretch occupies residues 2058-2473 (EDIYPATALQ…AVSCSDKETL (416 aa)). Positions 2496–2888 (RRTPHAPAVC…IGRRDGQLKL (393 aa)) are adenylation 3. In terms of domain architecture, Carrier 3 spans 3024–3100 (RPVTSQEHEM…QLICHLNTIR (77 aa)). Ser-3061 is subject to O-(pantetheine 4'-phosphoryl)serine. 2 condensation regions span residues 3117 to 3582 (WVAL…TYDQ) and 3603 to 4022 (NIYP…EHLV). Positions 4047–4426 (HNSRQAVFDD…VGRKDNQIKF (380 aa)) are adenylation 4. In terms of domain architecture, Carrier 4 spans 4560-4636 (MPSTAAERKM…DLSDQAKSLI (77 aa)). Ser-4597 is subject to O-(pantetheine 4'-phosphoryl)serine. The tract at residues 4673 to 5000 (DVLPTTSFQR…LQTIVQHQNN (328 aa)) is condensation 5.

It belongs to the NRP synthetase family.

The protein operates within secondary metabolite biosynthesis. In terms of biological role, nonribosomal peptide synthetase; part of the gene cluster that mediates the biosynthesis of malformins, cyclic pentapeptides with a disulfide bond between 2 consecutive cysteins, that show potential anti-tumor as well as antimalarial and antitrypanosomal properties. The nonribosomal peptide synthetase mlfA is responsible of the formation of the cyclic pentapeptide. The malformin biosynthesis clusters in malformin-producing fungi also contain enzymes involved in the formation of the disulfide bond between the two consecutive cysteins within malformins, in addition to additional tailoring enzymes such as methyltransferases or oxidoreductases. They are also composed of up to 4 major facilitator superfamily transporters, and transcription factors probably involved in the regulation of the expression of those clusters. In Aspergillus luchuensis (strain CBS 106.47), this protein is Malformin synthetase mlfA.